Here is a 436-residue protein sequence, read N- to C-terminus: Bifunctional protein GlmU (436 aa).

The interval 1-226 (MNEISIIILA…ETNFMGINDK (226 aa)) is pyrophosphorylase. UDP-N-acetyl-alpha-D-glucosamine-binding positions include 9–12 (LAAG), lysine 23, glutamine 75, and 82–83 (GT). Aspartate 105 lines the Mg(2+) pocket. Residues glycine 138, glutamate 152, asparagine 167, and asparagine 224 each contribute to the UDP-N-acetyl-alpha-D-glucosamine site. Residue asparagine 224 coordinates Mg(2+). The interval 227–247 (FALSIAEEIMQNRIKENLMKN) is linker. The interval 248–436 (GVIMSLPDTI…YKFFGKNDEK (189 aa)) is N-acetyltransferase. UDP-N-acetyl-alpha-D-glucosamine is bound by residues arginine 311 and lysine 328. Catalysis depends on histidine 339, which acts as the Proton acceptor. The UDP-N-acetyl-alpha-D-glucosamine site is built by tyrosine 342 and asparagine 353. Residues 362-363 (NY), serine 381, alanine 399, and arginine 416 each bind acetyl-CoA.

This sequence in the N-terminal section; belongs to the N-acetylglucosamine-1-phosphate uridyltransferase family. The protein in the C-terminal section; belongs to the transferase hexapeptide repeat family. Homotrimer. Requires Mg(2+) as cofactor.

It localises to the cytoplasm. It catalyses the reaction alpha-D-glucosamine 1-phosphate + acetyl-CoA = N-acetyl-alpha-D-glucosamine 1-phosphate + CoA + H(+). It carries out the reaction N-acetyl-alpha-D-glucosamine 1-phosphate + UTP + H(+) = UDP-N-acetyl-alpha-D-glucosamine + diphosphate. Its pathway is nucleotide-sugar biosynthesis; UDP-N-acetyl-alpha-D-glucosamine biosynthesis; N-acetyl-alpha-D-glucosamine 1-phosphate from alpha-D-glucosamine 6-phosphate (route II): step 2/2. It participates in nucleotide-sugar biosynthesis; UDP-N-acetyl-alpha-D-glucosamine biosynthesis; UDP-N-acetyl-alpha-D-glucosamine from N-acetyl-alpha-D-glucosamine 1-phosphate: step 1/1. The protein operates within bacterial outer membrane biogenesis; LPS lipid A biosynthesis. Functionally, catalyzes the last two sequential reactions in the de novo biosynthetic pathway for UDP-N-acetylglucosamine (UDP-GlcNAc). The C-terminal domain catalyzes the transfer of acetyl group from acetyl coenzyme A to glucosamine-1-phosphate (GlcN-1-P) to produce N-acetylglucosamine-1-phosphate (GlcNAc-1-P), which is converted into UDP-GlcNAc by the transfer of uridine 5-monophosphate (from uridine 5-triphosphate), a reaction catalyzed by the N-terminal domain. This Campylobacter fetus subsp. fetus (strain 82-40) protein is Bifunctional protein GlmU.